The chain runs to 195 residues: Peroxiredoxin (195 aa).

Residues 4–162 form the Thioredoxin domain; sequence AMIGKPAPEF…TLRLVQAFQF (159 aa). The Cysteine sulfenic acid (-SOH) intermediate role is filled by Cys-49.

This sequence belongs to the peroxiredoxin family. AhpC/Prx1 subfamily. As to quaternary structure, homodimer; disulfide-linked, upon oxidation.

The catalysed reaction is a hydroperoxide + [thioredoxin]-dithiol = an alcohol + [thioredoxin]-disulfide + H2O. Thiol-specific peroxidase that catalyzes the reduction of hydrogen peroxide and organic hydroperoxides to water and alcohols, respectively. Plays a role in cell protection against oxidative stress by detoxifying peroxides and as sensor of hydrogen peroxide-mediated signaling events. The chain is Peroxiredoxin from Ascaris suum (Pig roundworm).